A 670-amino-acid chain; its full sequence is uncharacterized protein (670 aa).

10 helical membrane passes run 23-42, 47-69, 76-98, 118-140, 153-170, 381-403, 410-432, 437-454, 461-483, and 493-510; these read YALRNTIAMCLALTVAYYLN, YWAMTSAAVVSFPTVGGVISKSL, LLGAIAALLLAGHTLNEPWFFLL, VAYAFQLAGYTAAIIAFPMVNIT, VCEVIVGILCGGMMMMIL, QWDAGANALTLAAISCVLYSAVA, SLLMRTLVLLSLFSFVVKFGLMV, LWQFLLFLFPLLATMQLL, FAALWGQLIVFMGSFIAVTNPPV, and NLAKIVGVALAWLAFAIL.

It belongs to the aromatic acid exporter ArAE (TC 2.A.85) family.

It is found in the cell membrane. This is an uncharacterized protein from Escherichia coli (strain K12).